The following is a 474-amino-acid chain: PRAME family member 13 (474 aa).

One copy of the LRR 1; degenerate repeat lies at 97–124 (RRKLQVLDLRDVDENFWARWPGAWALSC). One copy of the LRR 2; degenerate repeat lies at 179–203 (HLCCSKLVNYLTPIKHLRKSLKIIY). One copy of the LRR 3; degenerate repeat lies at 204 to 230 (LNSIQELEIHNMSWPRLIRKLRCYLKE). One copy of the LRR 4; degenerate repeat lies at 231-265 (MKTLGKLVFSRCHHSTSDNELEGRLVTKFSSVFLG). LRR repeat units lie at residues 266 to 291 (LEHL…IRCL), 292 to 323 (QNPL…GYLK), 324 to 342 (HLNL…PLGA), 348 to 375 (AASL…GLSR), and 376 to 400 (CSQL…LLRH).

It belongs to the PRAME family.

In Homo sapiens (Human), this protein is PRAME family member 13.